Here is a 290-residue protein sequence, read N- to C-terminus: Uridine diphosphate glucose pyrophosphatase NUDT22 (290 aa).

Substrate is bound by residues Phe56, Tyr87, Arg139, Ala144, Asp151, His156, and Glu158. A Nudix hydrolase domain is found at 118 to 285; that stretch reads ADPLGVGAAL…KGAIFLYNRV (168 aa). The Nudix box signature appears at 175 to 196; it reads GELVVHELFSSVLQEICDEVNV. The Mg(2+) site is built by Glu189 and Glu193. Ser274 serves as a coordination point for substrate.

Belongs to the Nudix family. Requires Mg(2+) as cofactor.

It carries out the reaction UDP-sugar + H2O = UMP + alpha-D-aldose 1-phosphate.. Functionally, hydrolyzes UDP-glucose to glucose 1-phosphate and UMP and UDP-galactose to galactose 1-phosphate and UMP. Preferred substrate is UDP-glucose. This Bos taurus (Bovine) protein is Uridine diphosphate glucose pyrophosphatase NUDT22 (NUDT22).